We begin with the raw amino-acid sequence, 389 residues long: MIVEPKFRGFICTTSHPIGCKKNVENQIEYVKENGKIEGAKRVLVLGASTGYGLASAIVASEACDAEVLGVSFEREAKGKRTASAGWYNIESLKKFVEGEGKKFISVNGDAFSNEVKSEVIDLIKENMGKVDLVIYSLAAPKRKDPVSGEVYSSCLKTVGAPFTSKTLDFHTGEIQNITINPATEEEIEGTRKVMGGEDWMLWIEALKEANVLENGVKTIAYSYIGPEVTYPIYREGTIGRAKNDLEKTAGEITKVLKSLNGEGYISVNKALVTQASSAIPIVSLYISILYKVMKEKGTHEGCIEQIYRMFKELYEGNLNLDSENRIRIDDLEMAEDVQKAIEEIWPQITSENVFELSDAEDFKKEFFKLFGFGLEGVDYSEDVDITTV.

Residues 47 to 52, 73 to 74, 110 to 111, and 138 to 139 contribute to the NAD(+) site; these read GASTGY, FE, DA, and LA. Position 224 (Y224) interacts with substrate. The active-site Proton donor is Y234. Residues K243 and 272–274 each bind NAD(+); that span reads LVT.

Belongs to the TER reductase family. Monomer.

It carries out the reaction a 2,3-saturated acyl-CoA + NAD(+) = a (2E)-enoyl-CoA + NADH + H(+). The protein operates within lipid metabolism; fatty acid biosynthesis. In terms of biological role, involved in the fatty acid synthesis (FAS II). Catalyzes the reduction of a carbon-carbon double bond in an enoyl moiety that is covalently linked to a coenzyme A (CoA). The sequence is that of Trans-2-enoyl-CoA reductase [NADH] from Clostridium perfringens (strain 13 / Type A).